We begin with the raw amino-acid sequence, 140 residues long: Alpha-lactalbumin (140 aa).

The first 19 residues, 1–19 (MMSLLPLLLIGIVLPATQA), serve as a signal peptide directing secretion. Positions 20-140 (KDYGKCELNQ…CRENLDQWNC (121 aa)) constitute a C-type lysozyme domain. 4 disulfides stabilise this stretch: cysteine 25-cysteine 140, cysteine 47-cysteine 131, cysteine 80-cysteine 96, and cysteine 92-cysteine 110. 5 residues coordinate Ca(2+): lysine 98, aspartate 101, aspartate 103, aspartate 106, and aspartate 107.

In terms of assembly, lactose synthase (LS) is a heterodimer of a catalytic component, beta1,4-galactosyltransferase (beta4Gal-T1) and a regulatory component, alpha-lactalbumin (LA). As to expression, mammary gland specific. Secreted in milk.

It localises to the secreted. In terms of biological role, regulatory subunit of lactose synthase, changes the substrate specificity of galactosyltransferase in the mammary gland making glucose a good acceptor substrate for this enzyme. This enables LS to synthesize lactose, the major carbohydrate component of milk. In other tissues, galactosyltransferase transfers galactose onto the N-acetylglucosamine of the oligosaccharide chains in glycoproteins. The sequence is that of Alpha-lactalbumin (LALBA) from Trichosurus vulpecula (Brush-tailed possum).